Reading from the N-terminus, the 194-residue chain is Outer-membrane lipoprotein LolB (194 aa).

Positions 1-18 (MKLLQHLTLIFCLLILTA) are cleaved as a signal peptide. C19 is lipidated: N-palmitoyl cysteine. The S-diacylglycerol cysteine moiety is linked to residue C19.

It belongs to the LolB family. As to quaternary structure, monomer.

It localises to the cell outer membrane. Plays a critical role in the incorporation of lipoproteins in the outer membrane after they are released by the LolA protein. This chain is Outer-membrane lipoprotein LolB, found in Tolumonas auensis (strain DSM 9187 / NBRC 110442 / TA 4).